Here is a 498-residue protein sequence, read N- to C-terminus: Phosphonates import ATP-binding protein PhnC (498 aa).

The tract at residues 1-27 (MPQRPEAARAGPVAGPDAASKPAPGPA) is disordered. The ABC transporter domain occupies 28 to 269 (LTLRGAGRAY…DLGELYEARR (242 aa)). 60–67 (GPSGAGKS) contributes to the ATP binding site. Positions 270–498 (GAADPARAPA…LEVARAEVPP (229 aa)) are lysR substrate binding domain.

The protein belongs to the ABC transporter superfamily. Phosphonates importer (TC 3.A.1.9.1) family. The complex is composed of two ATP-binding proteins (PhnC), two transmembrane proteins (PhnE) and a solute-binding protein (PhnD).

Its subcellular location is the cell inner membrane. The catalysed reaction is phosphonate(out) + ATP + H2O = phosphonate(in) + ADP + phosphate + H(+). In terms of biological role, part of the ABC transporter complex PhnCDE involved in phosphonates import. Responsible for energy coupling to the transport system. This is Phosphonates import ATP-binding protein PhnC from Anaeromyxobacter dehalogenans (strain 2CP-C).